The primary structure comprises 394 residues: Upstream-binding factor 1-like protein 1 (394 aa).

A DNA-binding region (HMG box 1) is located at residues 101 to 169 (PKRPLTAYLR…DFQKKMRQFK (69 aa)). Residues 167–180 (QFKKRHPVSGHPKK) show a composition bias toward basic residues. Positions 167–197 (QFKKRHPVSGHPKKSVVPQSHPTKVPTKSQG) are disordered. Over residues 183 to 197 (VPQSHPTKVPTKSQG) the composition is skewed to polar residues. The HMG box 2 DNA-binding region spans 225–291 (RKPPMNAYHK…QYRVKLDLWL (67 aa)). The interval 305 to 394 (AKATCGKRKN…SDSSSTDEDD (90 aa)) is disordered.

The protein localises to the cytoplasm. Its subcellular location is the nucleus. Its function is as follows. Essential for proliferation of the inner cell mass and trophectodermal cells in peri-implantation development. In Mus musculus (Mouse), this protein is Upstream-binding factor 1-like protein 1.